The primary structure comprises 206 residues: Large ribosomal subunit protein uL13y (206 aa).

It belongs to the universal ribosomal protein uL13 family.

The protein is Large ribosomal subunit protein uL13y (RPL13AB) of Arabidopsis thaliana (Mouse-ear cress).